Here is a 265-residue protein sequence, read N- to C-terminus: Dehydrin COR47 (265 aa).

Positions 1 to 14 (MAEEYKNNVPEHET) are enriched in basic and acidic residues. The interval 1-265 (MAEEYKNNVP…EVKKEKESDD (265 aa)) is disordered. N-acetylalanine is present on Ala-2. Over residues 16–28 (TVATEESPATTTE) the composition is skewed to polar residues. Positions 29–47 (VTDRGLFDFLGKKEEEVKP) are enriched in basic and acidic residues. Ser-64 carries the post-translational modification Phosphoserine. Residues 69–79 (AAEHEEVKENK) show a composition bias toward basic and acidic residues. Thr-90 is subject to Phosphothreonine. Composition is skewed to basic and acidic residues over residues 96–105 (NKPSVIEKLH) and 129–156 (IVEG…KTAE). Repeat 1 spans residues 133-153 (EEDKKGLVEKIKEKLPGHHDK). A 3 X 21 AA repeats, Lys-rich region spans residues 133–251 (EEDKKGLVEK…KEKLPGYHAK (119 aa)). Residues 160–172 (PVSTTIPVPVSES) are compositionally biased toward low complexity. 2 stretches are compositionally biased toward basic and acidic residues: residues 173–204 (VVEH…KAED) and 227–265 (PVEH…ESDD). 2 tandem repeats follow at residues 180–200 (EEEK…HHDE) and 231–251 (PEEK…YHAK).

Belongs to the plant dehydrin family.

The sequence is that of Dehydrin COR47 (COR47) from Arabidopsis thaliana (Mouse-ear cress).